Consider the following 373-residue polypeptide: Superinfection exclusion protein (373 aa).

An N-terminal signal peptide occupies residues 1 to 15 (MIVLLILSLACTAFT).

It belongs to the serpin family. Orthopoxvirus OPG040 subfamily. In terms of assembly, interacts with A56 protein.

The protein resides in the virion membrane. The protein localises to the host cell membrane. Functionally, prevents cell to cell fusion via its interaction with A56 protein. The A56-K2 complex associates with components of the entry fusion complex (EFC) presumably to avoid superinfection and syncytium formation. In Homo sapiens (Human), this protein is Superinfection exclusion protein (OPG040).